The chain runs to 1140 residues: Kinesin-like protein KIN-14O (1140 aa).

Residues 1–12 are compositionally biased toward basic and acidic residues; the sequence is MLESEFQREHAF. Disordered regions lie at residues 1–37, 50–81, 161–217, and 323–347; these read MLES…ADDD, NPAE…DEDS, SPGS…GGHK, and ASGT…KEED. Over residues 161-179 the composition is skewed to low complexity; that stretch reads SPGSSHGGSTPRSPFSPSS. Basic and acidic residues predominate over residues 180–193; the sequence is PRERHNKGLADSRF. Positions 197 to 209 are enriched in polar residues; sequence LPNSSALDPSSPG. The stretch at 327 to 546 forms a coiled coil; it reads SEENETEKSK…KAKEMEEKSE (220 aa). Over residues 332 to 347 the composition is skewed to basic and acidic residues; that stretch reads TEKSKLEEKKKDKEED. The Kinesin motor domain occupies 632 to 952; that stretch reads NIRVYCRVRP…LKFAERVSGV (321 aa). 716 to 723 is a binding site for ATP; sequence GQTGSGKT. A compositionally biased stretch (polar residues) spans 1002–1018; sequence LGQSDDFNSEAGDSQLS. Disordered regions lie at residues 1002–1021 and 1028–1140; these read LGQS…SIED and DYTR…KRWS. Basic and acidic residues predominate over residues 1066 to 1078; sequence EGRKPLKISDKPK. Residues 1099–1130 are compositionally biased toward polar residues; it reads TMRTTNIAKATSALLSPSSQGMKKTGSASNFL.

The protein belongs to the TRAFAC class myosin-kinesin ATPase superfamily. Kinesin family. KIN-14 subfamily.

This Arabidopsis thaliana (Mouse-ear cress) protein is Kinesin-like protein KIN-14O.